Reading from the N-terminus, the 559-residue chain is Asparagine--tRNA ligase, cytoplasmic (559 aa).

Ser-72 is modified (phosphoserine). The tract at residues 82 to 102 (HREQMKNDSREKKEAEDNLRR) is disordered. Residue Lys-255 is modified to N6-acetyllysine. Position 493 is a phosphoserine (Ser-493). An N6-acetyllysine modification is found at Lys-501.

Belongs to the class-II aminoacyl-tRNA synthetase family. As to quaternary structure, homodimer.

It is found in the cytoplasm. It catalyses the reaction tRNA(Asn) + L-asparagine + ATP = L-asparaginyl-tRNA(Asn) + AMP + diphosphate + H(+). Catalyzes the attachment of asparagine to tRNA(Asn) in a two-step reaction: asparagine is first activated by ATP to form Asn-AMP and then transferred to the acceptor end of tRNA(Asn). In addition to its essential role in protein synthesis, acts as a signaling molecule that induced migration of CCR3-expressing cells. Has an essential role in the development of the cerebral cortex, being required for proper proliferation of radial glial cells. This Mus musculus (Mouse) protein is Asparagine--tRNA ligase, cytoplasmic.